A 733-amino-acid polypeptide reads, in one-letter code: Protein PAT1 homolog 2 (733 aa).

2 disordered regions span residues 42 to 75 (LDQESDEEPVKLEDDHTKPIQMPEAPKEEEPEAL) and 337 to 366 (LHPQHRRILSQRQRPQSSSRRQWESRPDPY). The segment covering 49–59 (EPVKLEDDHTK) has biased composition (basic and acidic residues). Positions 346-356 (SQRQRPQSSSR) are enriched in low complexity.

It belongs to the PAT1 family. Interacts with ribonucleoprotein complex components. Interacts with cpeb. As to expression, oocyte-specific protein. Expressed throughout oogenesis but is not detectable in eggs, embryos, nor in adult tissues (at protein level).

It is found in the cytoplasm. It localises to the nucleus. Its function is as follows. RNA-binding protein that acts as a translational repressor. When overexpressed, able to disperse P-bodies. This chain is Protein PAT1 homolog 2 (patl2), found in Xenopus laevis (African clawed frog).